We begin with the raw amino-acid sequence, 1118 residues long: Protein translocase subunit SecA (1118 aa).

ATP-binding positions include Gln176, 194 to 198 (GEGKT), and Asp693. The interval 1034–1056 (QQPVQQPKYRETKDEAGSAFGGG) is disordered.

Belongs to the SecA family. As to quaternary structure, monomer and homodimer. Part of the essential Sec protein translocation apparatus which comprises SecA, SecYEG and auxiliary proteins SecDF. Other proteins may also be involved.

It localises to the cell inner membrane. Its subcellular location is the cytoplasm. It catalyses the reaction ATP + H2O + cellular proteinSide 1 = ADP + phosphate + cellular proteinSide 2.. Part of the Sec protein translocase complex. Interacts with the SecYEG preprotein conducting channel. Has a central role in coupling the hydrolysis of ATP to the transfer of proteins into and across the cell membrane, serving as an ATP-driven molecular motor driving the stepwise translocation of polypeptide chains across the membrane. The protein is Protein translocase subunit SecA of Cytophaga hutchinsonii (strain ATCC 33406 / DSM 1761 / CIP 103989 / NBRC 15051 / NCIMB 9469 / D465).